The primary structure comprises 420 residues: Glutamyl-tRNA reductase (420 aa).

Residues 49–52 (TCNR), serine 107, 112–114 (EPQ), and glutamine 118 each bind substrate. The Nucleophile role is filled by cysteine 50. 187-192 (GAGETI) provides a ligand contact to NADP(+).

This sequence belongs to the glutamyl-tRNA reductase family. Homodimer.

It carries out the reaction (S)-4-amino-5-oxopentanoate + tRNA(Glu) + NADP(+) = L-glutamyl-tRNA(Glu) + NADPH + H(+). It functions in the pathway porphyrin-containing compound metabolism; protoporphyrin-IX biosynthesis; 5-aminolevulinate from L-glutamyl-tRNA(Glu): step 1/2. Its function is as follows. Catalyzes the NADPH-dependent reduction of glutamyl-tRNA(Glu) to glutamate 1-semialdehyde (GSA). This chain is Glutamyl-tRNA reductase, found in Methylococcus capsulatus (strain ATCC 33009 / NCIMB 11132 / Bath).